The primary structure comprises 146 residues: Hemoglobin subunit beta (146 aa).

Val-1 is subject to N-acetylvaline. The Globin domain occupies 2 to 146 (HMTDAEKKLV…VANALAHKYH (145 aa)). At Thr-12 the chain carries Phosphothreonine. Lys-59 is subject to N6-acetyllysine. Residue His-63 coordinates heme b. The residue at position 82 (Lys-82) is an N6-acetyllysine. Heme b is bound at residue His-92. The residue at position 93 (Cys-93) is an S-nitrosocysteine. Position 144 is an N6-acetyllysine (Lys-144).

The protein belongs to the globin family. Tetramer of two alpha and two different beta chains. Two external cysteine residues at beta-16 and beta-52 cause reversible polymerization to octamers and most likely irreversible formation of higher polymers. Red blood cells.

Functionally, involved in oxygen transport from the lung to the various peripheral tissues. This Echinops telfairi (Lesser hedgehog tenrec) protein is Hemoglobin subunit beta (HBB).